The primary structure comprises 358 residues: D-alanine--D-alanine ligase B (358 aa).

An ATP-grasp domain is found at 147–352 (KYVLENFKFK…YSALIDELIE (206 aa)). Residue 179–234 (VEKLQYDVFIKPANSGSSVGITKAHNKEELLKGLEEAFIHDKNVLVEEAINAREIE) participates in ATP binding. Mg(2+)-binding residues include D305, E319, and N321.

Belongs to the D-alanine--D-alanine ligase family. Requires Mg(2+) as cofactor. Mn(2+) is required as a cofactor.

Its subcellular location is the cytoplasm. The enzyme catalyses 2 D-alanine + ATP = D-alanyl-D-alanine + ADP + phosphate + H(+). The protein operates within cell wall biogenesis; peptidoglycan biosynthesis. Its function is as follows. Cell wall formation. The chain is D-alanine--D-alanine ligase B from Clostridium tetani (strain Massachusetts / E88).